Consider the following 38-residue polypeptide: Photosystem II reaction center protein L (38 aa).

Residues 17–37 (SLYWGLLLIFVLAVPFSNYFF) traverse the membrane as a helical segment.

Belongs to the PsbL family. In terms of assembly, PSII is composed of 1 copy each of membrane proteins PsbA, PsbB, PsbC, PsbD, PsbE, PsbF, PsbH, PsbI, PsbJ, PsbK, PsbL, PsbM, PsbT, PsbX, PsbY, PsbZ, Psb30/Ycf12, at least 3 peripheral proteins of the oxygen-evolving complex and a large number of cofactors. It forms dimeric complexes.

The protein resides in the plastid. It localises to the chloroplast thylakoid membrane. One of the components of the core complex of photosystem II (PSII). PSII is a light-driven water:plastoquinone oxidoreductase that uses light energy to abstract electrons from H(2)O, generating O(2) and a proton gradient subsequently used for ATP formation. It consists of a core antenna complex that captures photons, and an electron transfer chain that converts photonic excitation into a charge separation. This subunit is found at the monomer-monomer interface and is required for correct PSII assembly and/or dimerization. The chain is Photosystem II reaction center protein L from Pinus thunbergii (Japanese black pine).